The following is a 389-amino-acid chain: 23S rRNA (uracil(747)-C(5))-methyltransferase RlmC (389 aa).

[4Fe-4S] cluster contacts are provided by cysteine 5, cysteine 13, cysteine 16, and cysteine 94. Residues glutamine 219, phenylalanine 248, glutamate 275, and asparagine 321 each coordinate S-adenosyl-L-methionine. Cysteine 348 serves as the catalytic Nucleophile.

This sequence belongs to the class I-like SAM-binding methyltransferase superfamily. RNA M5U methyltransferase family. RlmC subfamily.

The enzyme catalyses uridine(747) in 23S rRNA + S-adenosyl-L-methionine = 5-methyluridine(747) in 23S rRNA + S-adenosyl-L-homocysteine + H(+). Functionally, catalyzes the formation of 5-methyl-uridine at position 747 (m5U747) in 23S rRNA. The sequence is that of 23S rRNA (uracil(747)-C(5))-methyltransferase RlmC from Mannheimia succiniciproducens (strain KCTC 0769BP / MBEL55E).